The sequence spans 112 residues: Transmembrane protein 14C (112 aa).

Helical transmembrane passes span 7 to 27 (VVPLHWFGFGYAALVASGGII), 32 to 52 (AGSVPSLAAGLLFGSLASLGA), 62 to 82 (VWVFLATSGTLAGIMGMRFYH), and 86 to 106 (FMPAGLIAGASLLMVAKVGVS).

The protein belongs to the TMEM14 family.

It is found in the mitochondrion membrane. Functionally, required for normal heme biosynthesis. This Pongo abelii (Sumatran orangutan) protein is Transmembrane protein 14C (TMEM14C).